The following is a 930-amino-acid chain: SCY1-like protein 2 (930 aa).

Positions 32–327 constitute a Protein kinase domain; sequence FDVGRHIASG…ADQMTKIPFF (296 aa). One copy of the HEAT repeat lies at 443–479; that stretch reads DEIKNSVLPMVYRALEAPSIQIQELCLNIIPTFANLI. Residues serine 658 and serine 677 each carry the phosphoserine modification. The tract at residues 658 to 706 is disordered; that stretch reads SGSESENREDGMQGKQKRGSLTLEEKQKLAKEQEQAQKLKSQQPLKPQV. The segment covering 680–694 has biased composition (basic and acidic residues); that stretch reads LEEKQKLAKEQEQAQ. Residues 695–705 show a composition bias toward low complexity; that stretch reads KLKSQQPLKPQ. A Phosphothreonine modification is found at threonine 708. The segment at 895-930 is disordered; sequence GMQGNPFFNPQNFAQPPPTTMTSSSSASNDLKDLFG. Over residues 897–922 the composition is skewed to low complexity; the sequence is QGNPFFNPQNFAQPPPTTMTSSSSAS.

Belongs to the protein kinase superfamily. Interacts with clathrin and AP2B1; the interaction mediates the association with the AP-2 complex. In terms of processing, could autophosphorylate in presence of poly-L-lysine. In terms of tissue distribution, ubiquitously expressed.

It localises to the cytoplasmic vesicle. Its subcellular location is the clathrin-coated vesicle. The protein resides in the golgi apparatus. It is found in the trans-Golgi network membrane. The protein localises to the endosome membrane. Its function is as follows. Component of the AP2-containing clathrin coat that may regulate clathrin-dependent trafficking at plasma membrane, TGN and endosomal system. A possible serine/threonine-protein kinase toward the beta2-subunit of the plasma membrane adapter complex AP2 and other proteins in presence of poly-L-lysine has not been confirmed. By regulating the expression of excitatory receptors at synapses, plays an essential role in neuronal function and signaling and in brain development. The protein is SCY1-like protein 2 of Mus musculus (Mouse).